We begin with the raw amino-acid sequence, 105 residues long: Thioredoxin (105 aa).

The 105-residue stretch at 1–105 (MASNVTDKSF…SLIEWINNNI (105 aa)) folds into the Thioredoxin domain. A disulfide bond links Cys30 and Cys33.

This sequence belongs to the thioredoxin family.

Component of the thioredoxin-thioredoxin reductase system. Participates in various redox reactions through the reversible oxidation of its active center dithiol to a disulfide and catalyzes dithiol-disulfide exchange reactions. The sequence is that of Thioredoxin (trxA) from Rickettsia bellii (strain RML369-C).